Consider the following 349-residue polypeptide: Ion-translocating oxidoreductase complex subunit D (349 aa).

Helical transmembrane passes span Val20 to Gly42, Ser77 to Val99, and Ala124 to Ala144. FMN phosphoryl threonine is present on Thr185. Transmembrane regions (helical) follow at residues Ser212 to Leu232, Trp239 to Leu259, Ala265 to Thr285, Ala291 to Ile311, and Gly315 to Ile335.

This sequence belongs to the NqrB/RnfD family. As to quaternary structure, the complex is composed of six subunits: RnfA, RnfB, RnfC, RnfD, RnfE and RnfG. FMN is required as a cofactor.

The protein resides in the cell inner membrane. Part of a membrane-bound complex that couples electron transfer with translocation of ions across the membrane. This Shewanella baltica (strain OS195) protein is Ion-translocating oxidoreductase complex subunit D.